Reading from the N-terminus, the 255-residue chain is UPF0246 protein CC_3385 (255 aa).

It belongs to the UPF0246 family.

This chain is UPF0246 protein CC_3385, found in Caulobacter vibrioides (strain ATCC 19089 / CIP 103742 / CB 15) (Caulobacter crescentus).